The primary structure comprises 250 residues: Histone H1.2 (250 aa).

Over residues 1-11 (MSDSAVATSAS) the composition is skewed to polar residues. Disordered regions lie at residues 1 to 53 (MSDS…QMVD) and 101 to 250 (KLIQ…ATKK). The span at 27–42 (KKAAATPKSKKSTAAP) shows a compositional bias: low complexity. Residues 44 to 118 (SHPPTQQMVD…GASGSFKLSR (75 aa)) form the H15 domain. Positions 120-133 (AKKDPKPKASAVEK) are enriched in basic and acidic residues. A compositionally biased stretch (low complexity) spans 151-161 (STSTTKKAAGA). A compositionally biased stretch (basic and acidic residues) spans 174–191 (KSVEKKRADKAKAKDAKK). The segment covering 192 to 211 (TGTIKAKPTTAKAKSSATKP) has biased composition (low complexity). Composition is skewed to basic residues over residues 212–225 (KTPK…KPKK) and 235–250 (TAVK…ATKK).

It belongs to the histone H1/H5 family.

Its subcellular location is the nucleus. It localises to the chromosome. Histones H1 are necessary for the condensation of nucleosome chains into higher-order structures. The polypeptide is Histone H1.2 (His1.2) (Drosophila virilis (Fruit fly)).